Here is a 522-residue protein sequence, read N- to C-terminus: 2-isopropylmalate synthase (522 aa).

In terms of domain architecture, Pyruvate carboxyltransferase spans 5-267 (VIIFDTTLRD…YTNINAREIH (263 aa)). Positions 14, 202, 204, and 238 each coordinate Mn(2+). Residues 392–522 (VMEQLVVQSD…MQQTRELGGV (131 aa)) form a regulatory domain region.

This sequence belongs to the alpha-IPM synthase/homocitrate synthase family. LeuA type 1 subfamily. As to quaternary structure, homodimer. Requires Mn(2+) as cofactor.

The protein localises to the cytoplasm. It carries out the reaction 3-methyl-2-oxobutanoate + acetyl-CoA + H2O = (2S)-2-isopropylmalate + CoA + H(+). It participates in amino-acid biosynthesis; L-leucine biosynthesis; L-leucine from 3-methyl-2-oxobutanoate: step 1/4. In terms of biological role, catalyzes the condensation of the acetyl group of acetyl-CoA with 3-methyl-2-oxobutanoate (2-ketoisovalerate) to form 3-carboxy-3-hydroxy-4-methylpentanoate (2-isopropylmalate). This Shewanella amazonensis (strain ATCC BAA-1098 / SB2B) protein is 2-isopropylmalate synthase.